A 170-amino-acid chain; its full sequence is MDFKQHIAIVPDYPKEGIVFKDITPLMNDGKAYKAATDAIVEYAKERDIDLVVGPEARGFIIGCPVSYALEVGFAPVRKLGKLPREVITVDYGKEYGKDVLTIHKDAIKPGQRVLITDDLLATGGTIEATIKLVEELGGVVAGIAFLVELTYLDGRKMLDGYDVLVLEKY.

This sequence belongs to the purine/pyrimidine phosphoribosyltransferase family. As to quaternary structure, homodimer.

Its subcellular location is the cytoplasm. It catalyses the reaction AMP + diphosphate = 5-phospho-alpha-D-ribose 1-diphosphate + adenine. It functions in the pathway purine metabolism; AMP biosynthesis via salvage pathway; AMP from adenine: step 1/1. Its function is as follows. Catalyzes a salvage reaction resulting in the formation of AMP, that is energically less costly than de novo synthesis. The polypeptide is Adenine phosphoribosyltransferase (Bacillus anthracis (strain A0248)).